A 478-amino-acid chain; its full sequence is Catalase easC (478 aa).

Histidine 54 is a catalytic residue. Tyrosine 343 lines the heme pocket. Positions 459–478 (VAEKARPDSPSRAQPGQLRL) are disordered.

This sequence belongs to the catalase family. Requires heme as cofactor.

Its pathway is alkaloid biosynthesis; ergot alkaloid biosynthesis. In terms of biological role, catalase; part of the gene cluster that mediates the biosynthesis of fungal ergot alkaloid. DmaW catalyzes the first step of ergot alkaloid biosynthesis by condensing dimethylallyl diphosphate (DMAP) and tryptophan to form 4-dimethylallyl-L-tryptophan. The second step is catalyzed by the methyltransferase easF that methylates 4-dimethylallyl-L-tryptophan in the presence of S-adenosyl-L-methionine, resulting in the formation of 4-dimethylallyl-L-abrine. The catalase easC and the FAD-dependent oxidoreductase easE then transform 4-dimethylallyl-L-abrine to chanoclavine-I which is further oxidized by easD in the presence of NAD(+), resulting in the formation of chanoclavine-I aldehyde. Chanoclavine-I aldehyde is the precursor of ergoamides and ergopeptines in Clavicipitaceae, and clavine-type alcaloids such as fumiclavine in Trichocomaceae. However, the metabolites downstream of chanoclavine-I aldehyde in Arthrodermataceae have not been identified yet. This Arthroderma benhamiae (strain ATCC MYA-4681 / CBS 112371) (Trichophyton mentagrophytes) protein is Catalase easC.